The chain runs to 2543 residues: Highly reducing polyketide synthase GPY1 (2543 aa).

The 427-residue stretch at 9–435 (REPIAIVSMA…GSTAHAVVEF (427 aa)) folds into the Ketosynthase family 3 (KS3) domain. Catalysis depends on for beta-ketoacyl synthase activity residues cysteine 182, histidine 318, and histidine 358. A malonyl-CoA:ACP transacylase (MAT) domain region spans residues 574–881 (TFTGQGAMWS…PFFATMLRNA (308 aa)). An N-terminal hotdog fold region spans residues 953 to 1089 (HEILGSRCRG…GRAAVLETSK (137 aa)). The tract at residues 953 to 1253 (HEILGSRCRG…GLQMDRATSD (301 aa)) is dehydratase (DH) domain. Residues 953–1256 (HEILGSRCRG…MDRATSDDNT (304 aa)) enclose the PKS/mFAS DH domain. Residue histidine 985 is the Proton acceptor; for dehydratase activity of the active site. Residues 1103–1256 (MPLKVPLKSY…MDRATSDDNT (154 aa)) form a C-terminal hotdog fold region. The active-site Proton donor; for dehydratase activity is aspartate 1169. The methyltransferase (CMet) domain stretch occupies residues 1399-1587 (NDLLYRFYEE…LDEWRNELAA (189 aa)). Positions 1830-2136 (GILESLTMAQ…IEGTSNKQVV (307 aa)) are enoyl reductase (ER) domain. The tract at residues 2161-2335 (TYIITGGLGG…ASSVDLGFVE (175 aa)) is ketoreductase (KR) domain. Residues 2464 to 2541 (ALQPFVCTAL…DLSARVSRMI (78 aa)) enclose the Carrier domain. Serine 2501 carries the O-(pantetheine 4'-phosphoryl)serine modification.

Functionally, highly reducing polyketide synthase; part of the gene cluster that mediates the biosynthesis of gibepyrone A, a 2H-pyran-2-one metabolite exhibiting a moderate antimicrobial activity against Gram-positive bacteria and yeasts. The highly reducing polyketide synthase GPY1 is sufficient to produce gibepyrone A. GPY1 uses an acetyl-CoA starter unit, three malonyl-CoA extender units, and two SAM-dependent methylations to establish the gibepyrone A carbon backbone, followed by product release upon intramolecular cyclization. The gibepyrone A derivatives gibepyrones B and D are produced by cluster-independent P450 monooxygenases, probably to protect the fungus from the toxic product. In contrast, the formation of gibepyrones E and F from gibepyrone A is a spontaneous process and independent of enzymatic activity. The chain is Highly reducing polyketide synthase GPY1 from Gibberella fujikuroi (strain CBS 195.34 / IMI 58289 / NRRL A-6831) (Bakanae and foot rot disease fungus).